The sequence spans 220 residues: Ribose-5-phosphate isomerase A (220 aa).

Residues T28 to T31, D81 to D84, and K94 to G97 contribute to the substrate site. The active-site Proton acceptor is the E103. Residue K121 participates in substrate binding.

It belongs to the ribose 5-phosphate isomerase family. As to quaternary structure, homodimer.

It catalyses the reaction aldehydo-D-ribose 5-phosphate = D-ribulose 5-phosphate. It participates in carbohydrate degradation; pentose phosphate pathway; D-ribose 5-phosphate from D-ribulose 5-phosphate (non-oxidative stage): step 1/1. Functionally, catalyzes the reversible conversion of ribose-5-phosphate to ribulose 5-phosphate. This chain is Ribose-5-phosphate isomerase A, found in Coxiella burnetii (strain CbuK_Q154) (Coxiella burnetii (strain Q154)).